The chain runs to 914 residues: Polyribonucleotide nucleotidyltransferase (914 aa).

Residues 407 to 427 (YMHNYEMPPYSTGETGRVGSP) form a disordered region. Residues aspartate 521 and aspartate 527 each contribute to the Mg(2+) site. Residues 587-646 (PRIITTSVPVEKIGEVIGPKGKMINQIQEDTGAEIAIEDDGTVFISSEGGEAAKKAKSII) enclose the KH domain. The S1 motif domain maps to 658–730 (GETYNGKVVK…DRGKISLAIP (73 aa)). The tract at residues 727-914 (LAIPGFEDQE…VRRDFDPFED (188 aa)) is disordered. Composition is skewed to basic and acidic residues over residues 742-789 (SRGD…RRSD), 797-865 (DRPR…DRRG), and 873-899 (RGSD…ERTE).

The protein belongs to the polyribonucleotide nucleotidyltransferase family. Mg(2+) serves as cofactor.

It is found in the cytoplasm. The enzyme catalyses RNA(n+1) + phosphate = RNA(n) + a ribonucleoside 5'-diphosphate. Its function is as follows. Involved in mRNA degradation. Catalyzes the phosphorolysis of single-stranded polyribonucleotides processively in the 3'- to 5'-direction. In Bifidobacterium longum subsp. infantis (strain ATCC 15697 / DSM 20088 / JCM 1222 / NCTC 11817 / S12), this protein is Polyribonucleotide nucleotidyltransferase.